The sequence spans 315 residues: Spermidine synthase 1 (315 aa).

The region spanning 25–262 (PGWFSEISPL…GMIGFMLCST (238 aa)) is the PABS domain. An S-adenosyl 3-(methylsulfanyl)propylamine-binding site is contributed by Gln-56. Residue Tyr-86 participates in putrescine binding. Residues Gln-87, Asp-111, Glu-131, 162 to 163 (DG), and Asp-181 each bind S-adenosyl 3-(methylsulfanyl)propylamine. Asp-181 serves as the catalytic Proton acceptor. Putrescine is bound by residues 181-184 (DSSD) and Tyr-250.

This sequence belongs to the spermidine/spermine synthase family.

The enzyme catalyses S-adenosyl 3-(methylsulfanyl)propylamine + putrescine = S-methyl-5'-thioadenosine + spermidine + H(+). It functions in the pathway amine and polyamine biosynthesis; spermidine biosynthesis; spermidine from putrescine: step 1/1. The sequence is that of Spermidine synthase 1 from Hyoscyamus niger (Black henbane).